We begin with the raw amino-acid sequence, 248 residues long: Ubiquinone biosynthesis O-methyltransferase (248 aa).

Positions 40, 71, 92, and 135 each coordinate S-adenosyl-L-methionine.

Belongs to the methyltransferase superfamily. UbiG/COQ3 family.

It catalyses the reaction a 3-demethylubiquinol + S-adenosyl-L-methionine = a ubiquinol + S-adenosyl-L-homocysteine + H(+). The catalysed reaction is a 3-(all-trans-polyprenyl)benzene-1,2-diol + S-adenosyl-L-methionine = a 2-methoxy-6-(all-trans-polyprenyl)phenol + S-adenosyl-L-homocysteine + H(+). It participates in cofactor biosynthesis; ubiquinone biosynthesis. Functionally, O-methyltransferase that catalyzes the 2 O-methylation steps in the ubiquinone biosynthetic pathway. The sequence is that of Ubiquinone biosynthesis O-methyltransferase from Ruegeria pomeroyi (strain ATCC 700808 / DSM 15171 / DSS-3) (Silicibacter pomeroyi).